We begin with the raw amino-acid sequence, 154 residues long: uncharacterized protein (154 aa).

5 helical membrane-spanning segments follow: residues 5–24 (TLIIAVAGLFAVASSIGVLL), 29–48 (FYAALYMSVTMLFVAAIYAA), 53–75 (PVVVIIALIFVGAVGIVTVAIAA), 87–109 (IFWVVPVIVVFAILALAYASMAV), and 124–146 (ATDYFFVVAFLFTLVVLMMLSAI).

Its subcellular location is the cell membrane. This is an uncharacterized protein from Archaeoglobus fulgidus (strain ATCC 49558 / DSM 4304 / JCM 9628 / NBRC 100126 / VC-16).